Here is a 194-residue protein sequence, read N- to C-terminus: Molybdenum cofactor guanylyltransferase (194 aa).

GTP is bound by residues 12–14, Lys25, Asn53, Asp70, and Asp100; that span reads LAG. Asp100 lines the Mg(2+) pocket.

This sequence belongs to the MobA family. In terms of assembly, monomer. It depends on Mg(2+) as a cofactor.

It is found in the cytoplasm. The enzyme catalyses Mo-molybdopterin + GTP + H(+) = Mo-molybdopterin guanine dinucleotide + diphosphate. In terms of biological role, transfers a GMP moiety from GTP to Mo-molybdopterin (Mo-MPT) cofactor (Moco or molybdenum cofactor) to form Mo-molybdopterin guanine dinucleotide (Mo-MGD) cofactor. The chain is Molybdenum cofactor guanylyltransferase from Aliivibrio fischeri (strain ATCC 700601 / ES114) (Vibrio fischeri).